We begin with the raw amino-acid sequence, 269 residues long: 3-methyl-2-oxobutanoate hydroxymethyltransferase (269 aa).

Positions 50 and 89 each coordinate Mg(2+). 3-methyl-2-oxobutanoate contacts are provided by residues 50-51 (DS), aspartate 89, and lysine 118. Position 120 (glutamate 120) interacts with Mg(2+). Glutamate 187 acts as the Proton acceptor in catalysis.

The protein belongs to the PanB family. As to quaternary structure, homodecamer; pentamer of dimers. The cofactor is Mg(2+).

The protein localises to the cytoplasm. It carries out the reaction 3-methyl-2-oxobutanoate + (6R)-5,10-methylene-5,6,7,8-tetrahydrofolate + H2O = 2-dehydropantoate + (6S)-5,6,7,8-tetrahydrofolate. It participates in cofactor biosynthesis; (R)-pantothenate biosynthesis; (R)-pantoate from 3-methyl-2-oxobutanoate: step 1/2. Functionally, catalyzes the reversible reaction in which hydroxymethyl group from 5,10-methylenetetrahydrofolate is transferred onto alpha-ketoisovalerate to form ketopantoate. The polypeptide is 3-methyl-2-oxobutanoate hydroxymethyltransferase (Nitrosomonas europaea (strain ATCC 19718 / CIP 103999 / KCTC 2705 / NBRC 14298)).